The primary structure comprises 449 residues: MTEEYWKGVDKIQYVGHQDKKSGLGFQYYNPEEEIMGKKMKDWLRFAVAYWHTFDQRLVDPFGDGTAQRPYDKYTDPMDLALAKVDAAFEFYQKLGVDYLCFHDRDLAPEGDTLRETNANLDKVVDKIVEYQKTSGMKVLWNTSNMFTNPRFVEGAATSPYADVFAYSAAQLKHSLEIGKRVGSENYVFWGGREGYESLWNTNMKQEQEHAAKIFHMAKDYANEIGFDAQMLLEPKPKEPTTHQYDFDAATTIAFMKEYDLDKDFKLNLEGNHANLAGHTYQHEIRVAREAGLLGSLDANQGDKLIGWDIDEYPSNLYETTAAMYEVVENGSIGPRGGLNFDAKPRRSAFAPEDLFLGHIVGMDSFAAGLRVAAAMKQDGFLDNLKADRYSSYKSGVGADIESGKADLKSLEAYAIDKPQSELIAATHSDHLEEIKDTINHYIIDTLSK.

Active-site residues include histidine 103 and aspartate 106. The Mg(2+) site is built by glutamate 234, glutamate 270, histidine 273, aspartate 298, aspartate 309, aspartate 311, and aspartate 342.

The protein belongs to the xylose isomerase family. In terms of assembly, homotetramer. Mg(2+) is required as a cofactor.

It localises to the cytoplasm. The enzyme catalyses alpha-D-xylose = alpha-D-xylulofuranose. This chain is Xylose isomerase, found in Levilactobacillus brevis (Lactobacillus brevis).